The following is a 427-amino-acid chain: UPF0229 protein YeaH (427 aa).

The segment covering 79-90 has biased composition (basic and acidic residues); sequence NDHFVQNDRIER. Residues 79–110 are disordered; the sequence is NDHFVQNDRIERPQGGGGGSGSGQGQASQDGE. Gly residues predominate over residues 92 to 102; that stretch reads QGGGGGSGSGQ.

Belongs to the UPF0229 family.

The polypeptide is UPF0229 protein YeaH (Escherichia coli (strain K12 / MC4100 / BW2952)).